The sequence spans 194 residues: Probable GTP-binding protein EngB (194 aa).

Positions 22–194 constitute an EngB-type G domain; it reads DLPEYALAGR…AWQFIKEGME (173 aa). GTP-binding positions include 30 to 37, 57 to 61, 75 to 78, 142 to 145, and 174 to 176; these read GRSNVGKS, GKTQT, DVPG, TKAD, and FSS. Mg(2+)-binding residues include Ser-37 and Thr-59.

The protein belongs to the TRAFAC class TrmE-Era-EngA-EngB-Septin-like GTPase superfamily. EngB GTPase family. Mg(2+) is required as a cofactor.

In terms of biological role, necessary for normal cell division and for the maintenance of normal septation. This Listeria monocytogenes serotype 4b (strain CLIP80459) protein is Probable GTP-binding protein EngB.